The chain runs to 478 residues: Glutamyl-tRNA reductase (478 aa).

Substrate is bound by residues 49–52 (TCNR), S109, 114–116 (EQQ), and Q120. Catalysis depends on C50, which acts as the Nucleophile. 191 to 196 (GAGSMG) is an NADP(+) binding site.

This sequence belongs to the glutamyl-tRNA reductase family. As to quaternary structure, homodimer.

The enzyme catalyses (S)-4-amino-5-oxopentanoate + tRNA(Glu) + NADP(+) = L-glutamyl-tRNA(Glu) + NADPH + H(+). It functions in the pathway porphyrin-containing compound metabolism; protoporphyrin-IX biosynthesis; 5-aminolevulinate from L-glutamyl-tRNA(Glu): step 1/2. Functionally, catalyzes the NADPH-dependent reduction of glutamyl-tRNA(Glu) to glutamate 1-semialdehyde (GSA). This chain is Glutamyl-tRNA reductase, found in Rhodococcus opacus (strain B4).